Here is a 456-residue protein sequence, read N- to C-terminus: MWQLASLSLLLTICGTCSTAAPPGSVFSSSESAHQVLRIRKRANSFLEEIRAGSLERECMEEICDFEEAKEIFQNVDDTLAYWSKYVDGDQCAALPPEHACDSPCCGHGSCIDGIGAFHCDCGRGWEGRFCQHEVSYINCSLDNGGCSHYCLEEEGGRHCSCAPGYRLGDDHLQCQPAVKFPCGRPGKQMEKKRKHLKRDTNQTDQIDPRLVNGKVTRRGESPWQVVLLDSKKKLACGAVLIHTSWVLTAAHCMEDSKKLIVRLGEYDLRRWEKGEMDVDIKEVLIHPNYSKSTTDNDIALLHLAQPAIFSQTIVPICLPDSGLAERELTQVGQETVVTGWGYRSETKRNRTFVLNFINIPVAPHNECIQAMYNMISENMLCAGILGDSRDACEGDSGGPMVTSFRGTWFLVGLVSWGEGCGRLHNYGIYTKVSRYLDWIHSHIRGEEASLENQVP.

The first 20 residues, 1-20 (MWQLASLSLLLTICGTCSTA), serve as a signal peptide directing secretion. Residues 21-42 (APPGSVFSSSESAHQVLRIRKR) constitute a propeptide that is removed on maturation. The Gla domain occupies 47–88 (LEEIRAGSLERECMEEICDFEEAKEIFQNVDDTLAYWSKYVD). Residues Glu48, Glu49, Glu56, Glu58, Glu61, Glu62, Glu67, Glu68, and Glu71 each carry the 4-carboxyglutamate modification. Cys59 and Cys64 are oxidised to a cystine. Intrachain disulfides connect Cys92–Cys111, Cys101–Cys106, Cys105–Cys120, and Cys122–Cys131. 2 consecutive EGF-like domains span residues 97-132 (PEHACDSPCCGHGSCIDGIGAFHCDCGRGWEGRFCQ) and 136-176 (SYIN…LQCQ). Asp113 bears the (3R)-3-hydroxyaspartate mark. An N-linked (GlcNAc...) asparagine glycan is attached at Asn139. Intrachain disulfides connect Cys140–Cys151, Cys147–Cys160, Cys162–Cys175, Cys183–Cys318, and Cys237–Cys253. The N-linked (GlcNAc...) asparagine glycan is linked to Asn202. Residues 211 to 445 (LVNGKVTRRG…YLDWIHSHIR (235 aa)) enclose the Peptidase S1 domain. Catalysis depends on His252, which acts as the Charge relay system. A glycan (N-linked (GlcNAc...) asparagine) is linked at Asn289. Asp298 serves as the catalytic Charge relay system. N-linked (GlcNAc...) asparagine glycosylation occurs at Asn350. 2 disulfides stabilise this stretch: Cys368–Cys382 and Cys393–Cys421. Ser397 serves as the catalytic Charge relay system.

Belongs to the peptidase S1 family. Synthesized as a single chain precursor, which is cleaved into a light chain and a heavy chain held together by a disulfide bond. The enzyme is then activated by thrombin, which cleaves a tetradecapeptide from the amino end of the heavy chain; this reaction, which occurs at the surface of endothelial cells, is strongly promoted by thrombomodulin. Post-translationally, the vitamin K-dependent, enzymatic carboxylation of some Glu residues allows the modified protein to bind calcium. In terms of processing, the iron and 2-oxoglutarate dependent 3-hydroxylation of aspartate and asparagine is (R) stereospecific within EGF domains. Plasma; synthesized in the liver.

It localises to the secreted. The protein resides in the golgi apparatus. It is found in the endoplasmic reticulum. The catalysed reaction is Degradation of blood coagulation factors Va and VIIIa.. Its function is as follows. Protein C is a vitamin K-dependent serine protease that regulates blood coagulation by inactivating factors Va and VIIIa in the presence of calcium ions and phospholipids. Exerts a protective effect on the endothelial cell barrier function. The protein is Vitamin K-dependent protein C (PROC) of Canis lupus familiaris (Dog).